The sequence spans 222 residues: UPF0502 protein SO_1867 (222 aa).

The segment covering 169 to 193 has biased composition (polar residues); it reads EQVSATSLSADSPSADSNSLNAQDR. A disordered region spans residues 169–195; it reads EQVSATSLSADSPSADSNSLNAQDRQQ.

This sequence belongs to the UPF0502 family.

This chain is UPF0502 protein SO_1867, found in Shewanella oneidensis (strain ATCC 700550 / JCM 31522 / CIP 106686 / LMG 19005 / NCIMB 14063 / MR-1).